The following is a 277-amino-acid chain: Phosphoenolpyruvate synthase regulatory protein (277 aa).

157–164 serves as a coordination point for ADP; it reads GVSRCGKT.

The protein belongs to the pyruvate, phosphate/water dikinase regulatory protein family. PSRP subfamily.

It carries out the reaction [pyruvate, water dikinase] + ADP = [pyruvate, water dikinase]-phosphate + AMP + H(+). It catalyses the reaction [pyruvate, water dikinase]-phosphate + phosphate + H(+) = [pyruvate, water dikinase] + diphosphate. Its function is as follows. Bifunctional serine/threonine kinase and phosphorylase involved in the regulation of the phosphoenolpyruvate synthase (PEPS) by catalyzing its phosphorylation/dephosphorylation. The protein is Phosphoenolpyruvate synthase regulatory protein of Escherichia coli O1:K1 / APEC.